Reading from the N-terminus, the 202-residue chain is Pyridoxal 5'-phosphate synthase subunit PdxT (202 aa).

Residue Gly52–Ser54 coordinates L-glutamine. The active-site Nucleophile is Cys84. Residues Arg120 and Ile148–Arg149 each bind L-glutamine. Catalysis depends on charge relay system residues His185 and Glu187.

Belongs to the glutaminase PdxT/SNO family. In the presence of PdxS, forms a dodecamer of heterodimers. Only shows activity in the heterodimer.

The catalysed reaction is aldehydo-D-ribose 5-phosphate + D-glyceraldehyde 3-phosphate + L-glutamine = pyridoxal 5'-phosphate + L-glutamate + phosphate + 3 H2O + H(+). It carries out the reaction L-glutamine + H2O = L-glutamate + NH4(+). Its pathway is cofactor biosynthesis; pyridoxal 5'-phosphate biosynthesis. Catalyzes the hydrolysis of glutamine to glutamate and ammonia as part of the biosynthesis of pyridoxal 5'-phosphate. The resulting ammonia molecule is channeled to the active site of PdxS. The chain is Pyridoxal 5'-phosphate synthase subunit PdxT from Methanopyrus kandleri (strain AV19 / DSM 6324 / JCM 9639 / NBRC 100938).